The following is a 357-amino-acid chain: Uroporphyrinogen decarboxylase (357 aa).

Substrate contacts are provided by residues Arg-27 to Arg-31, Asp-77, Tyr-154, Ser-209, and His-330.

It belongs to the uroporphyrinogen decarboxylase family. In terms of assembly, homodimer.

Its subcellular location is the cytoplasm. It catalyses the reaction uroporphyrinogen III + 4 H(+) = coproporphyrinogen III + 4 CO2. Its pathway is porphyrin-containing compound metabolism; protoporphyrin-IX biosynthesis; coproporphyrinogen-III from 5-aminolevulinate: step 4/4. Catalyzes the decarboxylation of four acetate groups of uroporphyrinogen-III to yield coproporphyrinogen-III. In Acinetobacter baumannii (strain ACICU), this protein is Uroporphyrinogen decarboxylase.